The sequence spans 482 residues: Aspartyl/glutamyl-tRNA(Asn/Gln) amidotransferase subunit B (482 aa).

Belongs to the GatB/GatE family. GatB subfamily. As to quaternary structure, heterotrimer of A, B and C subunits.

The catalysed reaction is L-glutamyl-tRNA(Gln) + L-glutamine + ATP + H2O = L-glutaminyl-tRNA(Gln) + L-glutamate + ADP + phosphate + H(+). The enzyme catalyses L-aspartyl-tRNA(Asn) + L-glutamine + ATP + H2O = L-asparaginyl-tRNA(Asn) + L-glutamate + ADP + phosphate + 2 H(+). Functionally, allows the formation of correctly charged Asn-tRNA(Asn) or Gln-tRNA(Gln) through the transamidation of misacylated Asp-tRNA(Asn) or Glu-tRNA(Gln) in organisms which lack either or both of asparaginyl-tRNA or glutaminyl-tRNA synthetases. The reaction takes place in the presence of glutamine and ATP through an activated phospho-Asp-tRNA(Asn) or phospho-Glu-tRNA(Gln). The chain is Aspartyl/glutamyl-tRNA(Asn/Gln) amidotransferase subunit B from Ehrlichia canis (strain Jake).